Reading from the N-terminus, the 312-residue chain is Large ribosomal subunit protein uL10 (312 aa).

Lysine 14 is covalently cross-linked (Glycyl lysine isopeptide (Lys-Gly) (interchain with G-Cter in ubiquitin)). At serine 68 the chain carries Phosphoserine. Residues lysine 97 and lysine 144 each participate in a glycyl lysine isopeptide (Lys-Gly) (interchain with G-Cter in ubiquitin) cross-link. The segment at 199 to 230 (SSILDITDEELVSHFVSAVSTIASISLAIGYP) is interaction with P1A-P2B. The segment at 231 to 258 (TLPSVGHTLINNYKDLLAVAIAASYHYP) is interaction with P1B-P2A. Over residues 278-293 (PAATSAASGDAAPAEE) the composition is skewed to low complexity. Positions 278-312 (PAATSAASGDAAPAEEAAAEEEEESDDDMGFGLFD) are disordered. Residues 294–306 (AAAEEEEESDDDM) show a composition bias toward acidic residues. Residue serine 302 is modified to Phosphoserine; by CK2.

This sequence belongs to the universal ribosomal protein uL10 family. As to quaternary structure, component of the large ribosomal subunit (LSU). Mature yeast ribosomes consist of a small (40S) and a large (60S) subunit. The 40S small subunit contains 1 molecule of ribosomal RNA (18S rRNA) and 33 different proteins (encoded by 57 genes). The large 60S subunit contains 3 rRNA molecules (25S, 5.8S and 5S rRNA) and 46 different proteins (encoded by 81 genes). The 5 acidic ribosomal P-proteins form the stalk structure of the 60S subunit. They are organized as a pentameric complex in which uL10/P0 interacts with 2 heterodimers, P1A-P2B and P1B-P2A. uL10 directly interacts with 28S rRNA. uL10 interacts with YFL034W.

Its subcellular location is the cytoplasm. Component of the ribosome, a large ribonucleoprotein complex responsible for the synthesis of proteins in the cell. The small ribosomal subunit (SSU) binds messenger RNAs (mRNAs) and translates the encoded message by selecting cognate aminoacyl-transfer RNA (tRNA) molecules. The large subunit (LSU) contains the ribosomal catalytic site termed the peptidyl transferase center (PTC), which catalyzes the formation of peptide bonds, thereby polymerizing the amino acids delivered by tRNAs into a polypeptide chain. The nascent polypeptides leave the ribosome through a tunnel in the LSU and interact with protein factors that function in enzymatic processing, targeting, and the membrane insertion of nascent chains at the exit of the ribosomal tunnel. uL10 forms part of the P stalk that participates in recruiting G proteins to the ribosome. The sequence is that of Large ribosomal subunit protein uL10 from Saccharomyces cerevisiae (strain ATCC 204508 / S288c) (Baker's yeast).